The chain runs to 112 residues: T cell receptor alpha variable 12-1 (112 aa).

The first 20 residues, 1–20 (MISLRVLLVILWLQLSWVWS), serve as a signal peptide directing secretion. One can recognise an Ig-like domain in the interval 23-112 (KEVEQDPGPF…DSATYLCVVN (90 aa)). Asn43 is a glycosylation site (N-linked (GlcNAc...) asparagine). An intrachain disulfide couples Cys44 to Cys109.

Alpha-beta TR is a heterodimer composed of an alpha and beta chain; disulfide-linked. The alpha-beta TR is associated with the transmembrane signaling CD3 coreceptor proteins to form the TR-CD3 (TcR or TCR). The assembly of alpha-beta TR heterodimers with CD3 occurs in the endoplasmic reticulum where a single alpha-beta TR heterodimer associates with one CD3D-CD3E heterodimer, one CD3G-CD3E heterodimer and one CD247 homodimer forming a stable octameric structure. CD3D-CD3E and CD3G-CD3E heterodimers preferentially associate with TR alpha and TR beta chains, respectively. The association of the CD247 homodimer is the last step of TcR assembly in the endoplasmic reticulum and is required for transport to the cell surface.

It localises to the cell membrane. Functionally, v region of the variable domain of T cell receptor (TR) alpha chain that participates in the antigen recognition. Alpha-beta T cell receptors are antigen specific receptors which are essential to the immune response and are present on the cell surface of T lymphocytes. Recognize peptide-major histocompatibility (MH) (pMH) complexes that are displayed by antigen presenting cells (APC), a prerequisite for efficient T cell adaptive immunity against pathogens. Binding of alpha-beta TR to pMH complex initiates TR-CD3 clustering on the cell surface and intracellular activation of LCK that phosphorylates the ITAM motifs of CD3G, CD3D, CD3E and CD247 enabling the recruitment of ZAP70. In turn ZAP70 phosphorylates LAT, which recruits numerous signaling molecules to form the LAT signalosome. The LAT signalosome propagates signal branching to three major signaling pathways, the calcium, the mitogen-activated protein kinase (MAPK) kinase and the nuclear factor NF-kappa-B (NF-kB) pathways, leading to the mobilization of transcription factors that are critical for gene expression and essential for T cell growth and differentiation. The T cell repertoire is generated in the thymus, by V-(D)-J rearrangement. This repertoire is then shaped by intrathymic selection events to generate a peripheral T cell pool of self-MH restricted, non-autoaggressive T cells. Post-thymic interaction of alpha-beta TR with the pMH complexes shapes TR structural and functional avidity. This chain is T cell receptor alpha variable 12-1, found in Homo sapiens (Human).